We begin with the raw amino-acid sequence, 404 residues long: NADH-quinone oxidoreductase subunit D 2 (404 aa).

Belongs to the complex I 49 kDa subunit family. In terms of assembly, NDH-1 is composed of 14 different subunits. Subunits NuoB, C, D, E, F, and G constitute the peripheral sector of the complex.

The protein localises to the cell inner membrane. The enzyme catalyses a quinone + NADH + 5 H(+)(in) = a quinol + NAD(+) + 4 H(+)(out). Its function is as follows. NDH-1 shuttles electrons from NADH, via FMN and iron-sulfur (Fe-S) centers, to quinones in the respiratory chain. The immediate electron acceptor for the enzyme in this species is believed to be ubiquinone. Couples the redox reaction to proton translocation (for every two electrons transferred, four hydrogen ions are translocated across the cytoplasmic membrane), and thus conserves the redox energy in a proton gradient. This chain is NADH-quinone oxidoreductase subunit D 2, found in Rhizobium etli (strain CIAT 652).